The chain runs to 504 residues: Peptidyl-prolyl cis-trans isomerase CYP57 (504 aa).

At Ser-2 the chain carries N-acetylserine. The region spanning 16 to 167 (IVNTTHGPID…DPAPKILSVE (152 aa)) is the PPIase cyclophilin-type domain. A coiled-coil region spans residues 204–274 (NLLSFGEEAE…AKKEAAQKDK (71 aa)). 3 stretches are compositionally biased toward basic and acidic residues: residues 237–275 (RLLK…KDKS), 344–354 (EDEKPRMEKLS), and 364–374 (AKAEHMEKGDT). Disordered stretches follow at residues 237–374 (RLLK…KGDT), 416–441 (AKPF…KEED), and 482–504 (EKFN…KSLA). Positions 416–434 (AKPFTSSNEPVVLTSSSEP) are enriched in polar residues. Residues 494–504 (REREWSGKSLA) are compositionally biased toward basic and acidic residues.

It belongs to the cyclophilin-type PPIase family. Ubiquitous.

Its subcellular location is the nucleus. The protein resides in the cytoplasm. It catalyses the reaction [protein]-peptidylproline (omega=180) = [protein]-peptidylproline (omega=0). In terms of biological role, PPIases accelerate the folding of proteins. It catalyzes the cis-trans isomerization of proline imidic peptide bonds in oligopeptides. Involved in plant response to pathogen infection by increasing PAD4 expression in absence of EDS1 up-regulation. This is Peptidyl-prolyl cis-trans isomerase CYP57 (CYP57) from Arabidopsis thaliana (Mouse-ear cress).